The chain runs to 196 residues: ATP-dependent Clp protease proteolytic subunit 1 (196 aa).

The active-site Nucleophile is the S96. The active site involves H121.

Belongs to the peptidase S14 family. As to quaternary structure, fourteen ClpP subunits assemble into 2 heptameric rings which stack back to back to give a disk-like structure with a central cavity, resembling the structure of eukaryotic proteasomes.

The protein localises to the cytoplasm. It carries out the reaction Hydrolysis of proteins to small peptides in the presence of ATP and magnesium. alpha-casein is the usual test substrate. In the absence of ATP, only oligopeptides shorter than five residues are hydrolyzed (such as succinyl-Leu-Tyr-|-NHMec, and Leu-Tyr-Leu-|-Tyr-Trp, in which cleavage of the -Tyr-|-Leu- and -Tyr-|-Trp bonds also occurs).. In terms of biological role, cleaves peptides in various proteins in a process that requires ATP hydrolysis. Has a chymotrypsin-like activity. Plays a major role in the degradation of misfolded proteins. The chain is ATP-dependent Clp protease proteolytic subunit 1 from Prochlorococcus marinus subsp. pastoris (strain CCMP1986 / NIES-2087 / MED4).